A 2057-amino-acid polypeptide reads, in one-letter code: Myosin heavy chain, non-muscle (2057 aa).

The region spanning 78–128 (HRSVLVWVPHENQGFVAASIKREHGDEVEVELAETGKRVMILRDDIQKMNP) is the Myosin N-terminal SH3-like domain. In terms of domain architecture, Myosin motor spans 132–867 (DKVEDMAELT…VLAHLEEERD (736 aa)). 225 to 232 (GESGAGKT) contacts ATP. Residues 250-260 (PKGSGAVPHPA) form a 25 kDa/50 kDa junction region. The 50 kDa/20 kDa junction stretch occupies residues 722-734 (DTQFGARTRKGMF). The actin-binding stretch occupies residues 745 to 767 (LAKLMDTLRNTNPNFVRCIIPNH). Residues 782 to 798 (QLRCNGVLEGIRICRQG) form a reactive sulfhydryl/actin-binding region. Positions 870–899 (ISDLIVNFQAFCRGFLARRNYQKRLQQLNA) constitute an IQ domain. A coiled-coil region spans residues 926–2016 (KPLLEVTKQE…SLKTKLRRTG (1091 aa)). Disordered stretches follow at residues 1124-1144 (EERL…KRKI), 1782-1802 (SSER…EEIA), and 2008-2057 (LKTK…DSAN). The alpha-helical tailpiece (LMM) stretch occupies residues 1343–2010 (SQIAELQVKL…MNREINSLKT (668 aa)). The tract at residues 1343-2057 (SQIAELQVKL…ESLDGEDSAN (715 aa)) is light meromyosin (LMM). Over residues 1782-1792 (SSERARRAAET) the composition is skewed to basic and acidic residues. The interval 2011–2057 (KLRRTGGIGLSSSRLTGTPSSKRAGGGGGSDDSSVQDESLDGEDSAN) is globular tailpiece. Phosphoserine occurs at positions 2021 and 2022. The span at 2044-2057 (SVQDESLDGEDSAN) shows a compositional bias: acidic residues.

This sequence belongs to the TRAFAC class myosin-kinesin ATPase superfamily. Myosin family. Interacts with sau. Interacts with ck and Ubr3. Ubiquitinated. In terms of tissue distribution, in Johnston's organ, expressed in neurons and scolopale cells.

The protein resides in the cell projection. It localises to the cilium. Its subcellular location is the cytoplasm. Its function is as follows. Nonmuscle myosin appears to be responsible for cellularization. Required for morphogenesis and cytokinesis. Necessary for auditory transduction: plays a role in Johnston's organ organization by acting in scolopidial apical attachment. Interaction with the myosin ck may be important for this function. Localizes to and defines the trailing edge of cells during larval epidermal wound healing. This process is dependent on the phosphatidylinositol 4-phosphate 5-kinase sktl/skittles. The chain is Myosin heavy chain, non-muscle (zip) from Drosophila melanogaster (Fruit fly).